The chain runs to 548 residues: ATP synthase subunit alpha (548 aa).

172–179 (GDRKTGKT) is an ATP binding site. A disordered region spans residues 526–548 (AEAMDEADVEKESVKVRKPAPKK).

The protein belongs to the ATPase alpha/beta chains family. In terms of assembly, F-type ATPases have 2 components, CF(1) - the catalytic core - and CF(0) - the membrane proton channel. CF(1) has five subunits: alpha(3), beta(3), gamma(1), delta(1), epsilon(1). CF(0) has three main subunits: a(1), b(2) and c(9-12). The alpha and beta chains form an alternating ring which encloses part of the gamma chain. CF(1) is attached to CF(0) by a central stalk formed by the gamma and epsilon chains, while a peripheral stalk is formed by the delta and b chains.

The protein localises to the cell membrane. It catalyses the reaction ATP + H2O + 4 H(+)(in) = ADP + phosphate + 5 H(+)(out). In terms of biological role, produces ATP from ADP in the presence of a proton gradient across the membrane. The alpha chain is a regulatory subunit. In Mycolicibacterium vanbaalenii (strain DSM 7251 / JCM 13017 / BCRC 16820 / KCTC 9966 / NRRL B-24157 / PYR-1) (Mycobacterium vanbaalenii), this protein is ATP synthase subunit alpha.